The chain runs to 60 residues: Small ribosomal subunit protein bS21 (60 aa).

A disordered region spans residues 35–60 (REHYEKPSVKRKKKSEAARRRKSKVR). A compositionally biased stretch (basic residues) spans 43-60 (VKRKKKSEAARRRKSKVR).

This sequence belongs to the bacterial ribosomal protein bS21 family.

The sequence is that of Small ribosomal subunit protein bS21 from Clostridium novyi (strain NT).